The following is a 253-amino-acid chain: Phycoerythrobilin:ferredoxin oxidoreductase (253 aa).

It belongs to the HY2 family.

It carries out the reaction (3Z)-phycoerythrobilin + oxidized 2[4Fe-4S]-[ferredoxin] = 15,16-dihydrobiliverdin + reduced 2[4Fe-4S]-[ferredoxin] + 2 H(+). Catalyzes the two-electron reduction of the C2 and C3(1) diene system of 15,16-dihydrobiliverdin. In Prochlorococcus marinus (strain MIT 9301), this protein is Phycoerythrobilin:ferredoxin oxidoreductase.